Consider the following 241-residue polypeptide: Small ribosomal subunit protein bS6 (241 aa).

Over residues Lys-97 to Thr-108 the composition is skewed to basic residues. Residues Lys-97–Asn-241 are disordered. Positions Leu-109–Asn-118 are enriched in basic and acidic residues. 2 stretches are compositionally biased toward low complexity: residues Gln-130–Gln-151 and Asp-161–Gly-182. Residues Tyr-183–Glu-193 are compositionally biased toward basic and acidic residues. Residues Asn-194–Gln-210 are compositionally biased toward low complexity.

The protein belongs to the bacterial ribosomal protein bS6 family.

Its function is as follows. Binds together with bS18 to 16S ribosomal RNA. The sequence is that of Small ribosomal subunit protein bS6 from Mesomycoplasma hyopneumoniae (strain J / ATCC 25934 / NCTC 10110) (Mycoplasma hyopneumoniae).